A 109-amino-acid polypeptide reads, in one-letter code: DNA-binding protein MJ0691 (109 aa).

It belongs to the PDCD5 family.

In Methanocaldococcus jannaschii (strain ATCC 43067 / DSM 2661 / JAL-1 / JCM 10045 / NBRC 100440) (Methanococcus jannaschii), this protein is DNA-binding protein MJ0691.